Here is a 569-residue protein sequence, read N- to C-terminus: AA9 family lytic polysaccharide monooxygenase A (569 aa).

Residues 1–16 (MRIFSLALGFLPLVAG) form the signal peptide. Residues histidine 17 and histidine 99 each coordinate Cu(2+). Residues cysteine 59 and cysteine 189 are joined by a disulfide bond. The N-linked (GlcNAc...) asparagine glycan is linked to asparagine 112. Histidine 174 and glutamine 184 together coordinate O2. Tyrosine 186 provides a ligand contact to Cu(2+). Residues asparagine 244 and asparagine 381 are each glycosylated (N-linked (GlcNAc...) asparagine). Residues 399-424 (AADATATATATTEDAEATTAAEAAAT) show a composition bias toward low complexity. The tract at residues 399 to 439 (AADATATATATTEDAEATTAAEAAATSGAGRPGRGHGHGRG) is disordered. Asparagine 472 carries N-linked (GlcNAc...) asparagine glycosylation.

The protein belongs to the polysaccharide monooxygenase AA9 family. The cofactor is Cu(2+).

The protein localises to the secreted. The catalysed reaction is [(1-&gt;4)-beta-D-glucosyl]n+m + reduced acceptor + O2 = 4-dehydro-beta-D-glucosyl-[(1-&gt;4)-beta-D-glucosyl]n-1 + [(1-&gt;4)-beta-D-glucosyl]m + acceptor + H2O.. Its function is as follows. Lytic polysaccharide monooxygenase (LPMO) that depolymerizes crystalline and amorphous polysaccharides via the oxidation of scissile alpha- or beta-(1-4)-glycosidic bonds, yielding C4 oxidation products. Catalysis by LPMOs requires the reduction of the active-site copper from Cu(II) to Cu(I) by a reducing agent and H(2)O(2) or O(2) as a cosubstrate. The chain is AA9 family lytic polysaccharide monooxygenase A from Emericella nidulans (strain FGSC A4 / ATCC 38163 / CBS 112.46 / NRRL 194 / M139) (Aspergillus nidulans).